The chain runs to 193 residues: Selenate reductase assembly chaperone protein (193 aa).

Belongs to the type II DMSO reductase enzyme chaperone family.

It localises to the cytoplasm. In terms of biological role, may function as a system-specific chaperone protein essential for the assembly of an active selenate reductase SerABC. The sequence is that of Selenate reductase assembly chaperone protein from Thauera selenatis.